We begin with the raw amino-acid sequence, 244 residues long: Acidic leucine-rich nuclear phosphoprotein 32 family member A (244 aa).

4 LRR repeats span residues 18 to 41 (DVKE…TDEF), 43 to 64 (GLEF…PKLN), 65 to 87 (KLKK…AEKC), and 89 to 110 (NLTH…EPLK). Residues 123-161 (CEVTNLNDYRENLFKLLPQLTYLDGYDRDDKEAPDSDAE) enclose the LRRCT domain. Positions 148–244 (YDRDDKEAPD…DQDDEGEDDD (97 aa)) are disordered. Residues 157 to 227 (DSDAEGYVEG…EEDEGDEEAE (71 aa)) are compositionally biased toward acidic residues.

This sequence belongs to the ANP32 family. Phosphorylated on serine residues.

The protein localises to the nucleus. The protein resides in the cytoplasm. Its subcellular location is the endoplasmic reticulum. Implicated in a number of cellular processes, including proliferation, differentiation, caspase-dependent and caspase-independent apoptosis, suppression of transformation (tumor suppressor), inhibition of protein phosphatase 2A, regulation of mRNA trafficking and stability, and inhibition of acetyltransferases as part of the INHAT (inhibitor of histone acetyltransferases) complex. The sequence is that of Acidic leucine-rich nuclear phosphoprotein 32 family member A (anp32a) from Xenopus laevis (African clawed frog).